The sequence spans 269 residues: MGQNDLMGTAEDFADQFLRVTKQYLPHVARLCLISTFLEDGIRMWFQWSEQRDYIDTTWNCGYLLASSFVFLNLLGQLTGCILVLSRNFVQYACFGLFGIIALQTIAYSILWDLKFLMRNLALGGGLLLLLAESRSEGKSMFAGVPTMRESSPKQYMQLGGRVLLVLMFMTLLHFDASFFSILQNIVGTALMILVAIGFKTKLAALTLVVWLFAINVYFNAFWTIPVYKPMHDFLKYDFFQTMSVIGGLLLVVALGPGGVSMDEKKKEW.

A run of 5 helical transmembrane segments spans residues 64–84 (LLAS…CILV), 92–112 (YACF…SILW), 179–199 (FFSI…AIGF), 203–223 (LAAL…NAFW), and 239–259 (FFQT…GPGG). Residues 266–269 (KKEW) carry the Di-lysine motif motif.

This sequence belongs to the SURF4 family. In terms of assembly, found in a complex composed at least of SURF4, TMED2 and TMED10. May interact with LMAN1. Interacts with ZFYVE27 and with KIF5A in a ZFYVE27-dependent manner. Interacts with STING1. Interacts with SAR1B. Interacts with TMEM41B.

It localises to the endoplasmic reticulum membrane. The protein localises to the endoplasmic reticulum-Golgi intermediate compartment membrane. It is found in the golgi apparatus membrane. Its function is as follows. Endoplasmic reticulum cargo receptor that mediates the export of lipoproteins by recruiting cargos into COPII vesicles to facilitate their secretion. Acts as a cargo receptor for lipoproteins bearing both APOB and APOA1, thereby regulating lipoprotein delivery and the maintenance of lipid homeostasis. Synergizes with the GTPase SAR1B to mediate transport of circulating lipoproteins. Promotes the secretion of PCSK9. Also mediates the efficient secretion of erythropoietin (EPO). May also play a role in the maintenance of the architecture of the endoplasmic reticulum-Golgi intermediate compartment and of the Golgi. This Bos taurus (Bovine) protein is Surfeit locus protein 4.